We begin with the raw amino-acid sequence, 82 residues long: MSKGQNLQDPFLNTLRKEHVPVSIYLVNGIKLQGKVDSFDQYVIMLKNTVSQMVYKHAISTIVPGRPVRVPHAGESGDEEAE.

Positions 9-68 (DPFLNTLRKEHVPVSIYLVNGIKLQGKVDSFDQYVIMLKNTVSQMVYKHAISTIVPGRPV) constitute a Sm domain.

It belongs to the Hfq family. Homohexamer.

Functionally, RNA chaperone that binds small regulatory RNA (sRNAs) and mRNAs to facilitate mRNA translational regulation in response to envelope stress, environmental stress and changes in metabolite concentrations. Also binds with high specificity to tRNAs. This is RNA-binding protein Hfq from Methylococcus capsulatus (strain ATCC 33009 / NCIMB 11132 / Bath).